The chain runs to 426 residues: 3-phosphoshikimate 1-carboxyvinyltransferase (426 aa).

The 3-phosphoshikimate site is built by K22, S23, and R27. K22 lines the phosphoenolpyruvate pocket. Phosphoenolpyruvate-binding residues include G96 and R124. Residues S170, S171, Q172, S198, D314, N337, and K341 each coordinate 3-phosphoshikimate. Position 172 (Q172) interacts with phosphoenolpyruvate. The Proton acceptor role is filled by D314. Positions 345, 387, and 412 each coordinate phosphoenolpyruvate.

The protein belongs to the EPSP synthase family. As to quaternary structure, monomer.

The protein localises to the cytoplasm. The catalysed reaction is 3-phosphoshikimate + phosphoenolpyruvate = 5-O-(1-carboxyvinyl)-3-phosphoshikimate + phosphate. Its pathway is metabolic intermediate biosynthesis; chorismate biosynthesis; chorismate from D-erythrose 4-phosphate and phosphoenolpyruvate: step 6/7. Functionally, catalyzes the transfer of the enolpyruvyl moiety of phosphoenolpyruvate (PEP) to the 5-hydroxyl of shikimate-3-phosphate (S3P) to produce enolpyruvyl shikimate-3-phosphate and inorganic phosphate. This chain is 3-phosphoshikimate 1-carboxyvinyltransferase, found in Shewanella oneidensis (strain ATCC 700550 / JCM 31522 / CIP 106686 / LMG 19005 / NCIMB 14063 / MR-1).